The primary structure comprises 213 residues: Orotate phosphoribosyltransferase (213 aa).

Residue K26 participates in 5-phospho-alpha-D-ribose 1-diphosphate binding. Residue 34–35 (FF) coordinates orotate. Residues 72–73 (YK), R99, K100, K103, H105, and 124–132 (DDVITAGTA) contribute to the 5-phospho-alpha-D-ribose 1-diphosphate site. Positions 128 and 156 each coordinate orotate.

The protein belongs to the purine/pyrimidine phosphoribosyltransferase family. PyrE subfamily. As to quaternary structure, homodimer. The cofactor is Mg(2+).

It catalyses the reaction orotidine 5'-phosphate + diphosphate = orotate + 5-phospho-alpha-D-ribose 1-diphosphate. It functions in the pathway pyrimidine metabolism; UMP biosynthesis via de novo pathway; UMP from orotate: step 1/2. Catalyzes the transfer of a ribosyl phosphate group from 5-phosphoribose 1-diphosphate to orotate, leading to the formation of orotidine monophosphate (OMP). This chain is Orotate phosphoribosyltransferase, found in Shigella flexneri serotype 5b (strain 8401).